The primary structure comprises 215 residues: tRNA (guanine-N(7)-)-methyltransferase (215 aa).

S-adenosyl-L-methionine-binding residues include Glu44, Glu69, Asp96, and Asp118. Residue Asp118 is part of the active site. Substrate is bound by residues Lys122, Asp154, and 191-194 (TEYE).

The protein belongs to the class I-like SAM-binding methyltransferase superfamily. TrmB family.

It carries out the reaction guanosine(46) in tRNA + S-adenosyl-L-methionine = N(7)-methylguanosine(46) in tRNA + S-adenosyl-L-homocysteine. It functions in the pathway tRNA modification; N(7)-methylguanine-tRNA biosynthesis. Functionally, catalyzes the formation of N(7)-methylguanine at position 46 (m7G46) in tRNA. This chain is tRNA (guanine-N(7)-)-methyltransferase, found in Exiguobacterium sp. (strain ATCC BAA-1283 / AT1b).